Consider the following 615-residue polypeptide: MAEKFAEKTFTDPQQIRNFCIIAHIDHGKSTLADRILQLSNVVDARDMRDQYLDNMDIERERGITIKAQNVRLPWIPRTGPYAGEQIVMQMIDTPGHVDFTYEVSRALEACEGAILLVDAAQGIEAQTLANLYLAMENDLEIIPVLNKIDLPAADPEKYSLEIANIIGCEPEDVLRVSGKTGEGVEELLDKVAELIPAPTTDYPDDAPARAMIFDSVYDTYRGVVTYIRMIDGKLTPRQKIKMMSTGAVHELLEIGIVSPTPKKCSGLGPGEVGYLITGVKDVRQSKVGDTVTWAHNGAEEALQGYEEPKPMVYSGLFPISQADFPDLRDALEKLQLNDASLTYEPETSVALGFGFRCGFLGLLHMEITRDRLQREFDLDLISTAPSVNYRVVAEDGSEHRVHNPSDWPAGKLREVYEPIVKTTIIVPSDFVGTTMELCQTKRGQMDGMDYLSEDRVELRYTMPLGEIIFDFFDQLKSRTKGYASLNYEEAGEQLADLVKVDILLQGDPVDAFSAIVHRDNAQWYGNKMTKKLKELIPRQQFEVPVQAAIGSKVIARENIRALRKDVLAKCYGGDISRKRKLLEKQKEGKKRMKNIGSVSVPQEAFVAALSTDEG.

The region spanning 14–200 (QQIRNFCIIA…KVAELIPAPT (187 aa)) is the tr-type G domain. Residues 26–31 (DHGKST) and 147–150 (NKID) contribute to the GTP site.

The protein belongs to the TRAFAC class translation factor GTPase superfamily. Classic translation factor GTPase family. LepA subfamily.

The protein resides in the cell membrane. It catalyses the reaction GTP + H2O = GDP + phosphate + H(+). Its function is as follows. Required for accurate and efficient protein synthesis under certain stress conditions. May act as a fidelity factor of the translation reaction, by catalyzing a one-codon backward translocation of tRNAs on improperly translocated ribosomes. Back-translocation proceeds from a post-translocation (POST) complex to a pre-translocation (PRE) complex, thus giving elongation factor G a second chance to translocate the tRNAs correctly. Binds to ribosomes in a GTP-dependent manner. This is Elongation factor 4 from Corynebacterium diphtheriae (strain ATCC 700971 / NCTC 13129 / Biotype gravis).